Here is a 334-residue protein sequence, read N- to C-terminus: Beta-ketoacyl-[acyl-carrier-protein] synthase III (334 aa).

Catalysis depends on residues C114 and H253. The tract at residues 254-258 is ACP-binding; sequence QANIR. The active site involves N283.

It belongs to the thiolase-like superfamily. FabH family. In terms of assembly, homodimer.

It localises to the cytoplasm. It catalyses the reaction malonyl-[ACP] + acetyl-CoA + H(+) = 3-oxobutanoyl-[ACP] + CO2 + CoA. Its pathway is lipid metabolism; fatty acid biosynthesis. In terms of biological role, catalyzes the condensation reaction of fatty acid synthesis by the addition to an acyl acceptor of two carbons from malonyl-ACP. Catalyzes the first condensation reaction which initiates fatty acid synthesis and may therefore play a role in governing the total rate of fatty acid production. Possesses both acetoacetyl-ACP synthase and acetyl transacylase activities. Its substrate specificity determines the biosynthesis of branched-chain and/or straight-chain of fatty acids. The sequence is that of Beta-ketoacyl-[acyl-carrier-protein] synthase III from Campylobacter curvus (strain 525.92).